A 24-amino-acid chain; its full sequence is Cytochrome c oxidase subunit 5A-2, mitochondrial (24 aa).

This sequence belongs to the cytochrome c oxidase subunit 5A family. In terms of assembly, component of the cytochrome c oxidase (complex IV, CIV), a multisubunit enzyme composed of 14 subunits. The complex is composed of a catalytic core of 3 subunits MT-CO1, MT-CO2 and MT-CO3, encoded in the mitochondrial DNA, and 11 supernumerary subunits COX4I, COX5A, COX5B, COX6A, COX6B, COX6C, COX7A, COX7B, COX7C, COX8 and NDUFA4, which are encoded in the nuclear genome. The complex exists as a monomer or a dimer and forms supercomplexes (SCs) in the inner mitochondrial membrane with NADH-ubiquinone oxidoreductase (complex I, CI) and ubiquinol-cytochrome c oxidoreductase (cytochrome b-c1 complex, complex III, CIII), resulting in different assemblies (supercomplex SCI(1)III(2)IV(1) and megacomplex MCI(2)III(2)IV(2)).

It localises to the mitochondrion inner membrane. It functions in the pathway energy metabolism; oxidative phosphorylation. Functionally, component of the cytochrome c oxidase, the last enzyme in the mitochondrial electron transport chain which drives oxidative phosphorylation. The respiratory chain contains 3 multisubunit complexes succinate dehydrogenase (complex II, CII), ubiquinol-cytochrome c oxidoreductase (cytochrome b-c1 complex, complex III, CIII) and cytochrome c oxidase (complex IV, CIV), that cooperate to transfer electrons derived from NADH and succinate to molecular oxygen, creating an electrochemical gradient over the inner membrane that drives transmembrane transport and the ATP synthase. Cytochrome c oxidase is the component of the respiratory chain that catalyzes the reduction of oxygen to water. Electrons originating from reduced cytochrome c in the intermembrane space (IMS) are transferred via the dinuclear copper A center (CU(A)) of subunit 2 and heme A of subunit 1 to the active site in subunit 1, a binuclear center (BNC) formed by heme A3 and copper B (CU(B)). The BNC reduces molecular oxygen to 2 water molecules using 4 electrons from cytochrome c in the IMS and 4 protons from the mitochondrial matrix. This Thunnus obesus (Bigeye tuna) protein is Cytochrome c oxidase subunit 5A-2, mitochondrial.